A 1188-amino-acid chain; its full sequence is F-box only protein 38 (1188 aa).

Positions 30–75 (MNQLSHEVLCHIFRYLPLQDIMCMECLSRKLKEAVTLYLRVVRVVD) constitute an F-box domain. The tract at residues 59-119 (KLKEAVTLYL…LHPRYLERRR (61 aa)) is interaction with KLF7. 3 short sequence motifs (nuclear export signal) span residues 194–201 (LHLVGVNV), 307–316 (LEVDLGYLII), and 451–460 (LLPSLEFISL). The interval 487-526 (ALVSNQNSNNDDNNAQNNNANIHDNNHHHPDDSDEENDFR) is disordered. A compositionally biased stretch (low complexity) spans 491–509 (NQNSNNDDNNAQNNNANIH). Thr-591 carries the phosphothreonine modification. Phosphoserine is present on residues Ser-598, Ser-600, and Ser-606. Disordered regions lie at residues 620–666 (RRYS…FPLE), 685–766 (MKAA…MEEG), and 787–909 (RTSR…STSD). 2 stretches are compositionally biased toward basic and acidic residues: residues 621-630 (RYSEREEKTG) and 685-699 (MKAA…KNKD). A compositionally biased stretch (polar residues) spans 703–740 (SCSSTTASTVGNSSSHNTASQSPDFVRTVNSGGSSEPS). A phosphoserine mark is found at Ser-736 and Ser-740. Over residues 787–798 (RTSRCSDEERPS) the composition is skewed to basic and acidic residues. Over residues 849-861 (SSQPESCDVQSNE) the composition is skewed to polar residues. The segment covering 889 to 900 (TKPRHAMKRKRT) has biased composition (basic residues). The Nuclear localization signal signature appears at 896–899 (KRKR).

In terms of assembly, part of the SCF (SKP1-CUL1-F-box) E3 ubiquitin-protein ligase complex SCF(FBXO38) composed of CUL1, SKP1, RBX1 and FBXO38. Interacts with KLF7. Interacts with PDCD1/PD-1.

It is found in the cytoplasm. The protein resides in the cytosol. It localises to the nucleus. The protein operates within protein modification; protein ubiquitination. In terms of biological role, substrate recognition component of a SCF (SKP1-CUL1-F-box protein) E3 ubiquitin-protein ligase complex which mediates the ubiquitination and subsequent proteasomal degradation of PDCD1/PD-1, thereby regulating T-cells-mediated immunity. Required for anti-tumor activity of T-cells by promoting the degradation of PDCD1/PD-1; the PDCD1-mediated inhibitory pathway being exploited by tumors to attenuate anti-tumor immunity and facilitate tumor survival. May indirectly stimulate the activity of transcription factor KLF7, a regulator of neuronal differentiation, without promoting KLF7 ubiquitination. This is F-box only protein 38 from Homo sapiens (Human).